The following is a 370-amino-acid chain: MYKSVETILVDIPTIRPHKLSVTTMQTQTLVLIKIITEDGIVGWGEATTIGGLNYGEESPESVKANIDTYFKPLLLSIKAPLNVAQTLKLIRKSINGNRFAKCAIQTALLEIQAKRLNVPVSELLGGRIRDRLPVLWTLASGDTDKDIAEAKKMIELKRHNTFKLKIGSNPLQHDVDHVIAIKKALGPEISVRVDVNRAWSELECVKGIQQLQDGGIDLIEQPCAIENTDALARLTARFDVAIMADEVLTGPDSAYRIAKKSGADVFAVKVEQSGGLIEACEVAKIARLAGISLYGGTMLEGPVGSIASAHAFSTFETLEFGTELFGPLLLTQSILKTPLQYENFELVVPNTPGLGIEVDEDKLEQLRRH.

Lys166 is a catalytic residue. Mn(2+) is bound by residues Asp195, Glu221, and Asp246.

Belongs to the mandelate racemase/muconate lactonizing enzyme family. In terms of assembly, homooctamer. The cofactor is Mn(2+).

It catalyses the reaction (S)-muconolactone = cis,cis-muconate + H(+). Its pathway is aromatic compound metabolism; beta-ketoadipate pathway; 5-oxo-4,5-dihydro-2-furylacetate from catechol: step 2/3. Its function is as follows. Catalyzes a syn cycloisomerization. This Acinetobacter baylyi (strain ATCC 33305 / BD413 / ADP1) protein is Muconate cycloisomerase 1 (catB).